Here is a 281-residue protein sequence, read N- to C-terminus: Diaminopimelate epimerase (281 aa).

Residues asparagine 13 and asparagine 66 each contribute to the substrate site. The Proton donor role is filled by cysteine 75. Substrate-binding positions include 76-77 (GN), asparagine 164, asparagine 197, and 215-216 (ER). The active-site Proton acceptor is the cysteine 224. Residue 225–226 (GT) participates in substrate binding.

It belongs to the diaminopimelate epimerase family. As to quaternary structure, homodimer.

The protein localises to the cytoplasm. The catalysed reaction is (2S,6S)-2,6-diaminopimelate = meso-2,6-diaminopimelate. Its pathway is amino-acid biosynthesis; L-lysine biosynthesis via DAP pathway; DL-2,6-diaminopimelate from LL-2,6-diaminopimelate: step 1/1. Catalyzes the stereoinversion of LL-2,6-diaminopimelate (L,L-DAP) to meso-diaminopimelate (meso-DAP), a precursor of L-lysine and an essential component of the bacterial peptidoglycan. In Microcystis aeruginosa (strain NIES-843 / IAM M-2473), this protein is Diaminopimelate epimerase.